The chain runs to 750 residues: Photosystem I P700 chlorophyll a apoprotein A1 (750 aa).

8 helical membrane-spanning segments follow: residues 70 to 93 (VFSAHFGQLSIIFLWLSGMYFHGA), 156 to 179 (LYCTAIGALVFAALMLFAGWFHYH), 195 to 219 (LNHHLAGLLGLGSLSWAGHQVHVSL), 291 to 309 (IAHHHLAIAILFLIAGHMY), 346 to 369 (WHAQLSLNLAMLGSLTIVVAHHMY), 385 to 411 (LSLFTHHMWIGGFLIVGAAAHAAIFMV), 433 to 455 (AIISHLNWACIFLGFHSFGLYIH), and 531 to 549 (FLVHHIHAFTIHVTVLILL). Cys573 and Cys582 together coordinate [4Fe-4S] cluster. 2 helical membrane-spanning segments follow: residues 589–610 (HVFLGLFWMYNSISVVIFHFSW) and 664–686 (LSAYGLFFLGAHFVWAFSLMFLF). Chlorophyll a' is bound at residue His675. Chlorophyll a-binding residues include Met683 and Tyr691. Trp692 provides a ligand contact to phylloquinone. Residues 724–744 (AVGVTHYLLGGIATTWAFFLA) form a helical membrane-spanning segment.

It belongs to the PsaA/PsaB family. The PsaA/B heterodimer binds the P700 chlorophyll special pair and subsequent electron acceptors. PSI consists of a core antenna complex that captures photons, and an electron transfer chain that converts photonic excitation into a charge separation. The eukaryotic PSI reaction center is composed of at least 11 subunits. P700 is a chlorophyll a/chlorophyll a' dimer, A0 is one or more chlorophyll a, A1 is one or both phylloquinones and FX is a shared 4Fe-4S iron-sulfur center. serves as cofactor.

It is found in the plastid. It localises to the chloroplast thylakoid membrane. It carries out the reaction reduced [plastocyanin] + hnu + oxidized [2Fe-2S]-[ferredoxin] = oxidized [plastocyanin] + reduced [2Fe-2S]-[ferredoxin]. PsaA and PsaB bind P700, the primary electron donor of photosystem I (PSI), as well as the electron acceptors A0, A1 and FX. PSI is a plastocyanin-ferredoxin oxidoreductase, converting photonic excitation into a charge separation, which transfers an electron from the donor P700 chlorophyll pair to the spectroscopically characterized acceptors A0, A1, FX, FA and FB in turn. Oxidized P700 is reduced on the lumenal side of the thylakoid membrane by plastocyanin. This Jasminum nudiflorum (Winter jasmine) protein is Photosystem I P700 chlorophyll a apoprotein A1.